The primary structure comprises 72 residues: SRY-related protein MG43 (72 aa).

Residues 1–69 constitute a DNA-binding region (HMG box); the sequence is VKRPMNAFMV…KHMADYPDYK (69 aa).

It is found in the nucleus. The polypeptide is SRY-related protein MG43 (Tarentola mauritanica (Common wall gecko)).